The chain runs to 1274 residues: VWFA and cache domain-containing protein 1 (1274 aa).

An N-terminal signal peptide occupies residues 1-35; the sequence is MARQPEEEETAVARARRPPLWLLCLVACWLLGAGA. The Extracellular segment spans residues 36 to 1095; it reads EADFSILDEA…ITLNMIKSAP (1060 aa). The N-linked (GlcNAc...) asparagine glycan is linked to Asn-145. The region spanning 228 to 443 is the VWFA domain; the sequence is HIVVILDHGA…TTVGRFYTNL (216 aa). Cache domains lie at 453-532 and 772-853; these read FSLP…SEPP and LTGP…HPTL. A helical transmembrane segment spans residues 1096-1116; that stretch reads VGPVAGGIMGCIMVLVLAVYA. Residues 1117–1274 are Cytoplasmic-facing; that stretch reads YRHQIHRRSH…VTVHTVDAEC (158 aa). The disordered stretch occupies residues 1179–1227; it reads PERRRRYWGRSGTESDHGYSTMSPQEDSENPPCNNDPLSAGVDVGNHDE. A compositionally biased stretch (polar residues) spans 1196-1215; it reads GYSTMSPQEDSENPPCNNDP.

Belongs to the calcium channel subunit alpha-2/delta family.

It is found in the membrane. May regulate voltage-dependent calcium channels. In Homo sapiens (Human), this protein is VWFA and cache domain-containing protein 1 (CACHD1).